We begin with the raw amino-acid sequence, 116 residues long: Signal recognition particle 14 kDa protein (116 aa).

This sequence belongs to the SRP14 family. Heterodimer with ZK512.4/SRP9; binds RNA as heterodimer. Component of a signal recognition particle (SRP) complex that consists of a 7SL RNA molecule of 300 nucleotides and six protein subunits: srpa-72, srpa-68, SRP54, F37F2.2/SRP19, F25G6.8/SRP14 and ZK512.4/SRP9.

The protein resides in the cytoplasm. Functionally, component of the signal recognition particle (SRP) complex, a ribonucleoprotein complex that mediates the cotranslational targeting of secretory and membrane proteins to the endoplasmic reticulum (ER). F37F2.2/srpa-19 together with F25G6.8/srpa-14 and the Alu portion of the SRP RNA, constitutes the elongation arrest domain of SRP. The complex of F37F2.2/srpa-19 and F25G6.8/srpa-14 is required for SRP RNA binding. This Caenorhabditis elegans protein is Signal recognition particle 14 kDa protein.